The chain runs to 358 residues: Nuclear receptor subfamily 1 group I member 3 (358 aa).

A DNA-binding region (nuclear receptor) is located at residues 18–93 (PRNCVVCGDR…VGMRKDMILS (76 aa)). The NR C4-type zinc-finger motif lies at 21–41 (CVVCGDRATGYHFHALTCEGC). Thr48 is subject to Phosphothreonine; by PKC. The NR C4-type zinc finger occupies 57–81 (CPFAGRCEVSKAQRRHCPACRLQKC). The region spanning 119-358 (QQKELVQILL…MTPLLGEICS (240 aa)) is the NR LBD domain.

Belongs to the nuclear hormone receptor family. NR1 subfamily. As to quaternary structure, heterodimer of NR1I3 and RXR. Interacts with PSMC4. Interacts with ECT2. Directly interacts with DNAJC7; this complex may also include HSP90. Interacts with CRY1. Interacts with CRY2 in a ligand-dependent manner. Post-translationally, phosphorylated at Thr-48 by PKC, dephosphorylation of Thr-48 is required for nuclear translocation and activation. In terms of tissue distribution, predominantly expressed in liver.

It localises to the nucleus. The protein localises to the cytoplasm. It is found in the cytoskeleton. Binds and transactivates the retinoic acid response elements that control expression of the retinoic acid receptor beta 2 and alcohol dehydrogenase 3 genes. Transactivates both the phenobarbital responsive element module of the human CYP2B6 gene and the CYP3A4 xenobiotic response element. This chain is Nuclear receptor subfamily 1 group I member 3 (Nr1i3), found in Mus musculus (Mouse).